A 643-amino-acid chain; its full sequence is UvrABC system protein C (643 aa).

A GIY-YIG domain is found at 25–104; sequence AEPGVYFMRD…IKQHQPHFNV (80 aa). The region spanning 214-249 is the UVR domain; it reads SELVELLEAQMLQAAENLEFEKAAKIRDQIRGLEGL.

It belongs to the UvrC family. Interacts with UvrB in an incision complex.

It is found in the cytoplasm. The UvrABC repair system catalyzes the recognition and processing of DNA lesions. UvrC both incises the 5' and 3' sides of the lesion. The N-terminal half is responsible for the 3' incision and the C-terminal half is responsible for the 5' incision. The chain is UvrABC system protein C from Synechococcus elongatus (strain ATCC 33912 / PCC 7942 / FACHB-805) (Anacystis nidulans R2).